Consider the following 198-residue polypeptide: HTH-type transcriptional repressor DhaR (198 aa).

An HTH tetR-type domain is found at 4 to 64; sequence TPVRQHLVEK…QVLQEFFSDL (61 aa).

Its function is as follows. Transcriptional repressor for the dhaA haloalkane dehalogenase gene. In Mycobacterium sp. (strain GP1), this protein is HTH-type transcriptional repressor DhaR (dhaR).